A 259-amino-acid chain; its full sequence is DNA utilization protein HofM (259 aa).

Required for the use of extracellular DNA as a nutrient. The sequence is that of DNA utilization protein HofM (hofM) from Escherichia coli (strain K12).